Reading from the N-terminus, the 214-residue chain is MEGRRLSQLDRVIINFDDALRTVFGQPRTTERASPASGIAEGALSEKERRLSGCLMRVNHAGEVAAQALYQGQALTARLTEIRKAMENAAREENEHLVWCQQRVQELGAHTSYLGPFWYGGSFVIGALAGMAGDKWSLGFVAETEHQVVKHIERHLDRISAQDAPSRAILEQMKEDEARHATVALEAGGVELPSSIKALMGAASKVMTRTAYWI.

Fe cation is bound by residues Glu-63, Glu-93, His-96, Glu-145, Glu-177, and His-180.

It belongs to the COQ7 family. It depends on Fe cation as a cofactor.

It is found in the cell membrane. The catalysed reaction is a 5-methoxy-2-methyl-3-(all-trans-polyprenyl)benzene-1,4-diol + AH2 + O2 = a 3-demethylubiquinol + A + H2O. It functions in the pathway cofactor biosynthesis; ubiquinone biosynthesis. Its function is as follows. Catalyzes the hydroxylation of 2-nonaprenyl-3-methyl-6-methoxy-1,4-benzoquinol during ubiquinone biosynthesis. The sequence is that of 3-demethoxyubiquinol 3-hydroxylase from Nitrosococcus oceani (strain ATCC 19707 / BCRC 17464 / JCM 30415 / NCIMB 11848 / C-107).